The following is a 211-amino-acid chain: Molybdenum cofactor guanylyltransferase (211 aa).

GTP is bound by residues 12–14, Lys-25, Asn-55, Asp-73, and Asp-103; that span reads LAG. Asp-103 is a Mg(2+) binding site.

It belongs to the MobA family. Monomer. The cofactor is Mg(2+).

It localises to the cytoplasm. The catalysed reaction is Mo-molybdopterin + GTP + H(+) = Mo-molybdopterin guanine dinucleotide + diphosphate. Transfers a GMP moiety from GTP to Mo-molybdopterin (Mo-MPT) cofactor (Moco or molybdenum cofactor) to form Mo-molybdopterin guanine dinucleotide (Mo-MGD) cofactor. The chain is Molybdenum cofactor guanylyltransferase from Albidiferax ferrireducens (strain ATCC BAA-621 / DSM 15236 / T118) (Rhodoferax ferrireducens).